Consider the following 431-residue polypeptide: Cyclic 2,3-diphosphoglycerate synthetase (431 aa).

The protein belongs to the cyclic 2,3-diphosphoglycerate synthetase family.

It localises to the cytoplasm. It catalyses the reaction (2R)-2,3-bisphosphoglycerate + ATP + H(+) = cyclic (2R)-2,3-bisphosphoglycerate + ADP + phosphate. Functionally, catalyzes the formation of cyclic 2,3-diphosphoglycerate (cDPG) by formation of an intramolecular phosphoanhydride bond at the expense of ATP. This chain is Cyclic 2,3-diphosphoglycerate synthetase, found in Pyrococcus furiosus (strain ATCC 43587 / DSM 3638 / JCM 8422 / Vc1).